Consider the following 259-residue polypeptide: Type III pantothenate kinase (259 aa).

An ATP-binding site is contributed by 6-13 (DCGNTNTL). 108–111 (GADR) serves as a coordination point for substrate. Asp110 (proton acceptor) is an active-site residue. A K(+)-binding site is contributed by Asp130. Thr133 contacts ATP. Thr185 is a substrate binding site.

It belongs to the type III pantothenate kinase family. Homodimer. It depends on NH4(+) as a cofactor. K(+) serves as cofactor.

It localises to the cytoplasm. It carries out the reaction (R)-pantothenate + ATP = (R)-4'-phosphopantothenate + ADP + H(+). The protein operates within cofactor biosynthesis; coenzyme A biosynthesis; CoA from (R)-pantothenate: step 1/5. Catalyzes the phosphorylation of pantothenate (Pan), the first step in CoA biosynthesis. The polypeptide is Type III pantothenate kinase (Maricaulis maris (strain MCS10) (Caulobacter maris)).